A 420-amino-acid chain; its full sequence is Protein Rv2184c (420 aa).

Belongs to the arsA ATPase family.

The protein is Protein Rv2184c of Mycobacterium tuberculosis (strain ATCC 25618 / H37Rv).